The following is a 618-amino-acid chain: Methionine--tRNA ligase (618 aa).

Positions 12-22 (YYVNAEPHLGH) match the 'HIGH' region motif. Residues C127, C130, C144, and H147 each contribute to the Zn(2+) site. The 'KMSKS' region signature appears at 297-301 (KMSKT). ATP is bound at residue K300. Positions 518–618 (DFAKVELRVA…GEVPPGAVVK (101 aa)) constitute a tRNA-binding domain.

The protein belongs to the class-I aminoacyl-tRNA synthetase family. MetG type 2A subfamily. Homodimer. The cofactor is Zn(2+).

It is found in the cytoplasm. The enzyme catalyses tRNA(Met) + L-methionine + ATP = L-methionyl-tRNA(Met) + AMP + diphosphate. Is required not only for elongation of protein synthesis but also for the initiation of all mRNA translation through initiator tRNA(fMet) aminoacylation. The chain is Methionine--tRNA ligase (metG) from Thermus thermophilus (strain ATCC 27634 / DSM 579 / HB8).